The chain runs to 135 residues: Photosystem II extrinsic protein U (135 aa).

An N-terminal signal peptide occupies residues 1–26 (MKNLVRLLAVIALIIGSFWGKVPAQA).

It belongs to the PsbU family. PSII is composed of 1 copy each of membrane proteins PsbA, PsbB, PsbC, PsbD, PsbE, PsbF, PsbH, PsbI, PsbJ, PsbK, PsbL, PsbM, PsbT, PsbX, PsbY, PsbZ, Psb30/Ycf12, peripheral proteins PsbO, CyanoQ (PsbQ), PsbU, PsbV and a large number of cofactors. It forms dimeric complexes.

It localises to the cellular thylakoid membrane. In terms of biological role, one of the extrinsic, lumenal subunits of photosystem II (PSII). PSII is a light-driven water plastoquinone oxidoreductase, using light energy to abstract electrons from H(2)O, generating a proton gradient subsequently used for ATP formation. The extrinsic proteins stabilize the structure of photosystem II oxygen-evolving complex (OEC), the ion environment of oxygen evolution and protect the OEC against heat-induced inactivation. The polypeptide is Photosystem II extrinsic protein U (Microcystis aeruginosa (strain NIES-843 / IAM M-2473)).